The chain runs to 308 residues: Ribonuclease Z (308 aa).

His-60, His-62, Asp-64, His-65, His-140, Asp-209, and His-269 together coordinate Zn(2+). The active-site Proton acceptor is Asp-64.

The protein belongs to the RNase Z family. As to quaternary structure, homodimer. Zn(2+) is required as a cofactor.

The enzyme catalyses Endonucleolytic cleavage of RNA, removing extra 3' nucleotides from tRNA precursor, generating 3' termini of tRNAs. A 3'-hydroxy group is left at the tRNA terminus and a 5'-phosphoryl group is left at the trailer molecule.. In terms of biological role, zinc phosphodiesterase, which displays some tRNA 3'-processing endonuclease activity. Probably involved in tRNA maturation, by removing a 3'-trailer from precursor tRNA. The chain is Ribonuclease Z from Methanococcus maripaludis (strain C6 / ATCC BAA-1332).